A 271-amino-acid polypeptide reads, in one-letter code: 2,3,4,5-tetrahydropyridine-2,6-dicarboxylate N-succinyltransferase (271 aa).

R103 and D140 together coordinate substrate.

It belongs to the transferase hexapeptide repeat family. Homotrimer.

The protein localises to the cytoplasm. The catalysed reaction is (S)-2,3,4,5-tetrahydrodipicolinate + succinyl-CoA + H2O = (S)-2-succinylamino-6-oxoheptanedioate + CoA. It participates in amino-acid biosynthesis; L-lysine biosynthesis via DAP pathway; LL-2,6-diaminopimelate from (S)-tetrahydrodipicolinate (succinylase route): step 1/3. This is 2,3,4,5-tetrahydropyridine-2,6-dicarboxylate N-succinyltransferase from Methylococcus capsulatus (strain ATCC 33009 / NCIMB 11132 / Bath).